The following is a 302-amino-acid chain: MALLIAGPTASGKSALALRLAETCNGVVINTDSMQLYRDLHVLTARPTQEEEHQAPHVLFGSVDGRINYSVALWLDQARIALDEAQGQGRMPIFVGGTGLYFKALTQGLSDIPSVPDSIRADLRRHAEGCSTPELHRELAARDPEMAARLKPNDSQRILRALEVFVATGQSLAAFQNARSAPLLTMSEVLAVFLAPDRADLNRRIDRRFDTMLEQGALQEVERLGARGLDPSLPVMRAHGVPHLLRALRGEISLAEAADRGKLDTRHYAKRQFTFARHQLPDFAWRTPEEAETFFLSKLQRM.

7–14 (GPTASGKS) contributes to the ATP binding site. Residue 9–14 (TASGKS) coordinates substrate. 2 interaction with substrate tRNA regions span residues 32–35 (DSMQ) and 156–160 (QRILR).

The protein belongs to the IPP transferase family. As to quaternary structure, monomer. The cofactor is Mg(2+).

The enzyme catalyses adenosine(37) in tRNA + dimethylallyl diphosphate = N(6)-dimethylallyladenosine(37) in tRNA + diphosphate. Catalyzes the transfer of a dimethylallyl group onto the adenine at position 37 in tRNAs that read codons beginning with uridine, leading to the formation of N6-(dimethylallyl)adenosine (i(6)A). The polypeptide is tRNA dimethylallyltransferase (Beijerinckia indica subsp. indica (strain ATCC 9039 / DSM 1715 / NCIMB 8712)).